The sequence spans 326 residues: uncharacterized protein (326 aa).

A disordered region spans residues 293–326 (HRNYDANHSTSGEEENSGSRSRIAELSQSTIHRR).

This is an uncharacterized protein from Oryza latifolia (Indian wild rice).